The chain runs to 106 residues: Large ribosomal subunit protein eL42 (106 aa).

Zn(2+)-binding residues include Cys12, Cys17, Cys74, and Cys77.

It belongs to the eukaryotic ribosomal protein eL42 family. As to quaternary structure, component of the large ribosomal subunit. Mature ribosomes consist of a small (40S) and a large (60S) subunit. The 40S subunit contains about 32 different proteins and 1 molecule of RNA (18S). The 60S subunit contains 45 different proteins and 3 molecules of RNA (25S, 5.8S and 5S). It depends on Zn(2+) as a cofactor.

The protein resides in the cytoplasm. Its function is as follows. Component of the ribosome, a large ribonucleoprotein complex responsible for the synthesis of proteins in the cell. The small ribosomal subunit (SSU) binds messenger RNAs (mRNAs) and translates the encoded message by selecting cognate aminoacyl-transfer RNA (tRNA) molecules. The large subunit (LSU) contains the ribosomal catalytic site termed the peptidyl transferase center (PTC), which catalyzes the formation of peptide bonds, thereby polymerizing the amino acids delivered by tRNAs into a polypeptide chain. The nascent polypeptides leave the ribosome through a tunnel in the LSU and interact with protein factors that function in enzymatic processing, targeting, and the membrane insertion of nascent chains at the exit of the ribosomal tunnel. The sequence is that of Large ribosomal subunit protein eL42 (RPL44) from Candida albicans (strain SC5314 / ATCC MYA-2876) (Yeast).